Consider the following 84-residue polypeptide: Cell division topological specificity factor (84 aa).

It belongs to the MinE family.

In terms of biological role, prevents the cell division inhibition by proteins MinC and MinD at internal division sites while permitting inhibition at polar sites. This ensures cell division at the proper site by restricting the formation of a division septum at the midpoint of the long axis of the cell. This chain is Cell division topological specificity factor, found in Pseudomonas aeruginosa (strain LESB58).